Here is a 389-residue protein sequence, read N- to C-terminus: Succinyl-diaminopimelate desuccinylase (389 aa).

Histidine 75 provides a ligand contact to Zn(2+). Residue aspartate 77 is part of the active site. Aspartate 108 contributes to the Zn(2+) binding site. Glutamate 142 functions as the Proton acceptor in the catalytic mechanism. Residues glutamate 143, glutamate 171, and histidine 357 each coordinate Zn(2+).

This sequence belongs to the peptidase M20A family. DapE subfamily. As to quaternary structure, homodimer. Zn(2+) serves as cofactor. The cofactor is Co(2+).

The enzyme catalyses N-succinyl-(2S,6S)-2,6-diaminopimelate + H2O = (2S,6S)-2,6-diaminopimelate + succinate. Its pathway is amino-acid biosynthesis; L-lysine biosynthesis via DAP pathway; LL-2,6-diaminopimelate from (S)-tetrahydrodipicolinate (succinylase route): step 3/3. In terms of biological role, catalyzes the hydrolysis of N-succinyl-L,L-diaminopimelic acid (SDAP), forming succinate and LL-2,6-diaminopimelate (DAP), an intermediate involved in the bacterial biosynthesis of lysine and meso-diaminopimelic acid, an essential component of bacterial cell walls. This chain is Succinyl-diaminopimelate desuccinylase, found in Paracidovorax citrulli (strain AAC00-1) (Acidovorax citrulli).